The chain runs to 502 residues: MGIKAEEISSLIKQQIENYESELKVSEVGTVIRIGDGIALAHGLDNAMAGELLEFSNGVMGMAQNLEEGNVGIVILGPYTDIKEGDEVRRTGRIMEVPVGEELIGRVVNPLGQPVDGQGPINTTKSRPIESPAFGVMARKSVHEPLQTGIKAIDALVPIGRGQRELIIGDRQVGKTSVAIDTILNQDGENMICIYVAIGQKESTVRGVVETLRKHGALDYTIVVTAAASQPAPLLFLAPFAGVSMAEEFMLQGKHVLIVYDDLSKQASAYRELSLLLRRPPGREAYPGDVFYLHSRLLERAAKLNETYQNGSITALPFVETQAGDISAYIPTNVISITDGQIFLQSDLFNSGVRPAINAGLSVSRVGGSAQIKAMKKVAGTLRLDLAAFRELESFAQFGSDLDKITLAKLERGKRTVEVLKQDLNKPLKVEKQVAILYALTKGHLDDIPVQDIVRFESEFLSWLDSNHTNVLDHVRTTKELAPDADYVAALTEFKKTFAKSE.

ATP is bound at residue glycine 169–threonine 176.

Belongs to the ATPase alpha/beta chains family. As to quaternary structure, F-type ATPases have 2 components, CF(1) - the catalytic core - and CF(0) - the membrane proton channel. CF(1) has five subunits: alpha(3), beta(3), gamma(1), delta(1), epsilon(1). CF(0) has three main subunits: a(1), b(2) and c(9-12). The alpha and beta chains form an alternating ring which encloses part of the gamma chain. CF(1) is attached to CF(0) by a central stalk formed by the gamma and epsilon chains, while a peripheral stalk is formed by the delta and b chains.

It localises to the cell membrane. The enzyme catalyses ATP + H2O + 4 H(+)(in) = ADP + phosphate + 5 H(+)(out). Produces ATP from ADP in the presence of a proton gradient across the membrane. The alpha chain is a regulatory subunit. The chain is ATP synthase subunit alpha from Lysinibacillus sphaericus (strain C3-41).